A 239-amino-acid polypeptide reads, in one-letter code: Vesicle-associated protein 1-3 (239 aa).

M1 carries the N-acetylmethionine modification. Position 2 is an N-acetylthreonine; in Vesicle-associated protein 1-3, N-terminally processed (T2). Residues 2 to 215 (TTGDLVNIHP…RKETSKKQSG (214 aa)) lie on the Cytoplasmic side of the membrane. The MSP domain maps to 6–127 (LVNIHPTELK…EDFKLRVVYI (122 aa)). Residues S133 and S164 each carry the phosphoserine modification. Positions 179 to 214 (SMISKLTEEKTSATQQSQKLRLELEMLRKETSKKQS) form a coiled coil. A helical; Anchor for type IV membrane protein membrane pass occupies residues 216 to 236 (GHSLLLMLLVGLLGCVIGYLL).

The protein belongs to the VAMP-associated protein (VAP) (TC 9.B.17) family.

The protein resides in the endoplasmic reticulum membrane. In terms of biological role, may play a role in vesicle trafficking. The polypeptide is Vesicle-associated protein 1-3 (PVA13) (Arabidopsis thaliana (Mouse-ear cress)).